A 117-amino-acid polypeptide reads, in one-letter code: Hydrogenase maturation factor HypA (117 aa).

Residue His2 coordinates Ni(2+). 4 residues coordinate Zn(2+): Cys73, Cys76, Cys89, and Cys92.

Belongs to the HypA/HybF family.

Functionally, involved in the maturation of [NiFe] hydrogenases. Required for nickel insertion into the metal center of the hydrogenase. This is Hydrogenase maturation factor HypA from Chlorobium luteolum (strain DSM 273 / BCRC 81028 / 2530) (Pelodictyon luteolum).